The primary structure comprises 63 residues: Cytochrome c oxidase subunit 7C, mitochondrial (63 aa).

The transit peptide at 1-16 directs the protein to the mitochondrion; sequence MLGHSIRRFTTSVVRR. The Mitochondrial matrix segment spans residues 17–33; the sequence is SHYEEGPGKNLPFSVKN. Residue Lys25 is modified to N6-acetyllysine; alternate. Lys25 carries the post-translational modification N6-succinyllysine; alternate. Residues 34–60 form a helical membrane-spanning segment; sequence KWALLVKMSLYFGSAFATPFLIVRHQL. Residues 61–63 are Mitochondrial intermembrane-facing; sequence LKQ.

This sequence belongs to the cytochrome c oxidase VIIc family. In terms of assembly, component of the cytochrome c oxidase (complex IV, CIV), a multisubunit enzyme composed of 14 subunits. The complex is composed of a catalytic core of 3 subunits MT-CO1, MT-CO2 and MT-CO3, encoded in the mitochondrial DNA, and 11 supernumerary subunits COX4I, COX5A, COX5B, COX6A, COX6B, COX6C, COX7A, COX7B, COX7C, COX8 and NDUFA4, which are encoded in the nuclear genome. The complex exists as a monomer or a dimer and forms supercomplexes (SCs) in the inner mitochondrial membrane with NADH-ubiquinone oxidoreductase (complex I, CI) and ubiquinol-cytochrome c oxidoreductase (cytochrome b-c1 complex, complex III, CIII), resulting in different assemblies (supercomplex SCI(1)III(2)IV(1) and megacomplex MCI(2)III(2)IV(2)). Interacts with RAB5IF.

The protein localises to the mitochondrion inner membrane. It functions in the pathway energy metabolism; oxidative phosphorylation. Functionally, component of the cytochrome c oxidase, the last enzyme in the mitochondrial electron transport chain which drives oxidative phosphorylation. The respiratory chain contains 3 multisubunit complexes succinate dehydrogenase (complex II, CII), ubiquinol-cytochrome c oxidoreductase (cytochrome b-c1 complex, complex III, CIII) and cytochrome c oxidase (complex IV, CIV), that cooperate to transfer electrons derived from NADH and succinate to molecular oxygen, creating an electrochemical gradient over the inner membrane that drives transmembrane transport and the ATP synthase. Cytochrome c oxidase is the component of the respiratory chain that catalyzes the reduction of oxygen to water. Electrons originating from reduced cytochrome c in the intermembrane space (IMS) are transferred via the dinuclear copper A center (CU(A)) of subunit 2 and heme A of subunit 1 to the active site in subunit 1, a binuclear center (BNC) formed by heme A3 and copper B (CU(B)). The BNC reduces molecular oxygen to 2 water molecules using 4 electrons from cytochrome c in the IMS and 4 protons from the mitochondrial matrix. This Papio hamadryas (Hamadryas baboon) protein is Cytochrome c oxidase subunit 7C, mitochondrial (COX7C).